Reading from the N-terminus, the 143-residue chain is Ayaconin (143 aa).

The N-terminal stretch at Met1–Ala22 is a signal peptide.

In terms of assembly, interacts with human F12 (inactive). As to expression, salivary gland.

It localises to the secreted. Inhibits the intrinsic blood coagulation pathway in the host by blocking activation of host coagulation factor XII (F12). This Lutzomyia ayacuchensis (Sand fly) protein is Ayaconin.